The primary structure comprises 141 residues: Lutropin subunit beta (141 aa).

The first 22 residues, methionine 1–glycine 22, serve as a signal peptide directing secretion. Cystine bridges form between cysteine 30-cysteine 78, cysteine 44-cysteine 93, cysteine 47-cysteine 131, cysteine 55-cysteine 109, cysteine 59-cysteine 111, and cysteine 114-cysteine 121. N-linked (GlcNAc...) asparagine glycosylation is present at asparagine 34.

It belongs to the glycoprotein hormones subunit beta family. Heterodimer of a common alpha chain and a unique beta chain which confers biological specificity to thyrotropin, lutropin, follitropin and gonadotropin.

It is found in the secreted. Functionally, promotes spermatogenesis and ovulation by stimulating the testes and ovaries to synthesize steroids. The protein is Lutropin subunit beta (LHB) of Trichosurus vulpecula (Brush-tailed possum).